The primary structure comprises 87 residues: DNA-directed RNA polymerase subunit omega (87 aa).

This sequence belongs to the RNA polymerase subunit omega family. The RNAP catalytic core consists of 2 alpha, 1 beta, 1 beta' and 1 omega subunit. When a sigma factor is associated with the core the holoenzyme is formed, which can initiate transcription.

The enzyme catalyses RNA(n) + a ribonucleoside 5'-triphosphate = RNA(n+1) + diphosphate. Promotes RNA polymerase assembly. Latches the N- and C-terminal regions of the beta' subunit thereby facilitating its interaction with the beta and alpha subunits. The polypeptide is DNA-directed RNA polymerase subunit omega (Leifsonia xyli subsp. xyli (strain CTCB07)).